The chain runs to 289 residues: S-methyl-5'-thioadenosine phosphorylase (289 aa).

Residues S24, 66 to 67, and 99 to 100 each bind phosphate; these read RH and TA. A substrate-binding site is contributed by M202. T203 serves as a coordination point for phosphate. A substrate-binding site is contributed by 226–228; it reads DYD.

This sequence belongs to the PNP/MTAP phosphorylase family. MTAP subfamily. Homotrimer.

The protein resides in the cytoplasm. It localises to the nucleus. The catalysed reaction is S-methyl-5'-thioadenosine + phosphate = 5-(methylsulfanyl)-alpha-D-ribose 1-phosphate + adenine. It participates in amino-acid biosynthesis; L-methionine biosynthesis via salvage pathway; S-methyl-5-thio-alpha-D-ribose 1-phosphate from S-methyl-5'-thioadenosine (phosphorylase route): step 1/1. Functionally, catalyzes the reversible phosphorylation of S-methyl-5'-thioadenosine (MTA) to adenine and 5-methylthioribose-1-phosphate. Involved in the breakdown of MTA, a major by-product of polyamine biosynthesis. Responsible for the first step in the methionine salvage pathway after MTA has been generated from S-adenosylmethionine. Has broad substrate specificity with 6-aminopurine nucleosides as preferred substrates. This is S-methyl-5'-thioadenosine phosphorylase from Drosophila pseudoobscura pseudoobscura (Fruit fly).